Consider the following 374-residue polypeptide: Queuine tRNA-ribosyltransferase (374 aa).

Asp-92 acts as the Proton acceptor in catalysis. Substrate contacts are provided by residues 92–96, Asp-146, Gln-193, and Gly-220; that span reads DSGGY. The RNA binding stretch occupies residues 251–257; sequence GVGKPDD. Asp-270 acts as the Nucleophile in catalysis. Residues 275–279 are RNA binding; important for wobble base 34 recognition; it reads TRSGR. Zn(2+)-binding residues include Cys-308, Cys-310, Cys-313, and His-339.

The protein belongs to the queuine tRNA-ribosyltransferase family. In terms of assembly, homodimer. Within each dimer, one monomer is responsible for RNA recognition and catalysis, while the other monomer binds to the replacement base PreQ1. It depends on Zn(2+) as a cofactor.

The enzyme catalyses 7-aminomethyl-7-carbaguanine + guanosine(34) in tRNA = 7-aminomethyl-7-carbaguanosine(34) in tRNA + guanine. The protein operates within tRNA modification; tRNA-queuosine biosynthesis. Functionally, catalyzes the base-exchange of a guanine (G) residue with the queuine precursor 7-aminomethyl-7-deazaguanine (PreQ1) at position 34 (anticodon wobble position) in tRNAs with GU(N) anticodons (tRNA-Asp, -Asn, -His and -Tyr). Catalysis occurs through a double-displacement mechanism. The nucleophile active site attacks the C1' of nucleotide 34 to detach the guanine base from the RNA, forming a covalent enzyme-RNA intermediate. The proton acceptor active site deprotonates the incoming PreQ1, allowing a nucleophilic attack on the C1' of the ribose to form the product. After dissociation, two additional enzymatic reactions on the tRNA convert PreQ1 to queuine (Q), resulting in the hypermodified nucleoside queuosine (7-(((4,5-cis-dihydroxy-2-cyclopenten-1-yl)amino)methyl)-7-deazaguanosine). This Novosphingobium aromaticivorans (strain ATCC 700278 / DSM 12444 / CCUG 56034 / CIP 105152 / NBRC 16084 / F199) protein is Queuine tRNA-ribosyltransferase.